Consider the following 329-residue polypeptide: MNLIHKVSTICQCVLVILAKYCMQIIALSLMSGVQWLAWGIYKINKNRVGIIILFLYIMIVTCYVLTNLTPPGSPSETSFDPNSTRQYMTLQNGKSRFCEKCQEYKCDRSHHCSQCNKCILRMDHHCMWFKNCVGFRNHKFFFLECFYLNLYSICVLYSTFVAITKTFTAEGANISAIYLVFWGFLFAFAVGMSIVMTAFTFYHTSLLIHNLSTLESMSSSWSRYTHSTQPFNVGWYENWCQIMGKSPFLWLLPFPNSIGEGVEYPLNANALPYLPQTEEKNDKLYKSSVPASIAGAEGWSSDEEQYAMKNRRWNPHMGQYEWIEDFLV.

5 consecutive transmembrane segments (helical) span residues 14–34 (VLVI…MSGV), 49–69 (VGII…LTNL), 141–161 (FFFL…YSTF), 177–197 (AIYL…SIVM), and 243–263 (IMGK…GEGV). The 51-residue stretch at 97–147 (RFCEKCQEYKCDRSHHCSQCNKCILRMDHHCMWFKNCVGFRNHKFFFLECF) folds into the DHHC domain.

The protein belongs to the DHHC palmitoyltransferase family. PFA3 subfamily. In terms of processing, autopalmitoylated.

It localises to the vacuole membrane. Its subcellular location is the golgi apparatus membrane. The catalysed reaction is L-cysteinyl-[protein] + hexadecanoyl-CoA = S-hexadecanoyl-L-cysteinyl-[protein] + CoA. Palmitoyltransferase specific for VAC8. Palmitoylates VAC8 at one or more of its N-terminal cysteine residues, which is required for its proper membrane localization. The polypeptide is Palmitoyltransferase pfa3 (pfa3) (Schizosaccharomyces pombe (strain 972 / ATCC 24843) (Fission yeast)).